The sequence spans 602 residues: Alpha-glucosides permease MPH3 (602 aa).

The Cytoplasmic portion of the chain corresponds to 1–106 (MKNLSFLINR…AAAWSLLVST (106 aa)). A helical membrane pass occupies residues 107–127 (TLIMEGYDTAILGAFYALPIF). Residues 128–142 (QRKFGSQNDKTGEWE) lie on the Extracellular side of the membrane. A helical transmembrane segment spans residues 143–163 (ISASWQIGLTLCYMAGEIVGL). Topologically, residues 164–178 (QLTGPSVDLVGNRYT) are cytoplasmic. Residues 179 to 199 (LIIALFFLAAFTFILYFCNSL) form a helical membrane-spanning segment. Position 200 (G200) is a topological domain, extracellular. The helical transmembrane segment at 201–221 (MIAVGQALCGMPWGCFQCLTV) threads the bilayer. Over 222 to 234 (SYASEICPLALRY) the chain is Cytoplasmic. The chain crosses the membrane as a helical span at residues 235–255 (YLTTYSNLCWLFGQLFAAGIM). The Extracellular segment spans residues 256–270 (KNSQKKYADSELGYK). Residues 271–291 (LPFALQWILPVPLALGIFFAP) traverse the membrane as a helical segment. Topologically, residues 292–363 (ESPWWLVKKG…EDKINRRRTR (72 aa)) are cytoplasmic. A helical transmembrane segment spans residues 364-384 (ITCLCWAGQATCGSILIGYST). Residues 385-397 (YFYEKAGVSTEMS) are Extracellular-facing. The chain crosses the membrane as a helical span at residues 398–418 (FTFSIIQYCLGICATFLSWWA). The Cytoplasmic portion of the chain corresponds to 419-426 (SKYFGRYD). Residues 427 to 447 (LYAFGLAFQTIVFFIIGGLGC) traverse the membrane as a helical segment. At 448–459 (SSTHGSKMGSGS) the chain is on the extracellular side. The chain crosses the membrane as a helical span at residues 460–480 (LLMAVAFFYNLGIAPVVFCLV). At 481 to 492 (SEMPSSRLRTKT) the chain is on the cytoplasmic side. Residues 493 to 513 (IILARNTYNVVSIICSVLILY) form a helical membrane-spanning segment. The Extracellular portion of the chain corresponds to 514 to 525 (QLNSKKWNWGAK). The chain crosses the membrane as a helical span at residues 526-546 (SGFFWGVLCFCTLIWAVVDLP). The Cytoplasmic portion of the chain corresponds to 547–602 (ETAGKTFVEINELFKLGVSARKFKSTKVDPFVVKNPPKDVSHNDPKGDIEASIAEE). The segment at 580–602 (KNPPKDVSHNDPKGDIEASIAEE) is disordered. The span at 582–595 (PPKDVSHNDPKGDI) shows a compositional bias: basic and acidic residues.

Belongs to the major facilitator superfamily. Sugar transporter (TC 2.A.1.1) family.

It is found in the cell membrane. Its function is as follows. High-affinity uptake of maltose and maltotriose. Also transports alpha-methylglucoside, glucose and turanose but not melezitose or trehalose. This Saccharomyces cerevisiae (strain AWRI1631) (Baker's yeast) protein is Alpha-glucosides permease MPH3 (MPH3).